A 493-amino-acid polypeptide reads, in one-letter code: Proline--tRNA ligase (493 aa).

This sequence belongs to the class-II aminoacyl-tRNA synthetase family. ProS type 3 subfamily. In terms of assembly, homodimer.

It localises to the cytoplasm. It catalyses the reaction tRNA(Pro) + L-proline + ATP = L-prolyl-tRNA(Pro) + AMP + diphosphate. Functionally, catalyzes the attachment of proline to tRNA(Pro) in a two-step reaction: proline is first activated by ATP to form Pro-AMP and then transferred to the acceptor end of tRNA(Pro). The polypeptide is Proline--tRNA ligase (Porphyromonas gingivalis (strain ATCC BAA-308 / W83)).